Reading from the N-terminus, the 62-residue chain is uncharacterized protein (62 aa).

The interval 1 to 62 (MSSTAEEMAA…SNGEAKRKEK (62 aa)) is disordered. A compositionally biased stretch (basic and acidic residues) spans 28–37 (TKSDRVEHKH).

This is an uncharacterized protein from Caenorhabditis elegans.